The chain runs to 156 residues: S-ribosylhomocysteine lyase (156 aa).

The Fe cation site is built by H54, H58, and C123.

Belongs to the LuxS family. In terms of assembly, homodimer. Fe cation is required as a cofactor.

It catalyses the reaction S-(5-deoxy-D-ribos-5-yl)-L-homocysteine = (S)-4,5-dihydroxypentane-2,3-dione + L-homocysteine. In terms of biological role, involved in the synthesis of autoinducer 2 (AI-2) which is secreted by bacteria and is used to communicate both the cell density and the metabolic potential of the environment. The regulation of gene expression in response to changes in cell density is called quorum sensing. Catalyzes the transformation of S-ribosylhomocysteine (RHC) to homocysteine (HC) and 4,5-dihydroxy-2,3-pentadione (DPD). This Ligilactobacillus salivarius (strain UCC118) (Lactobacillus salivarius) protein is S-ribosylhomocysteine lyase.